The chain runs to 406 residues: MKIQLRDIFEPLSANHMAKVDLWFVMSLIAILALGIVMVASASISVSESIHNTPYFFMGRQILYLILGVSFGFMMLQIPTQNLQKWGILLMLLSLVLLVLVLVPGIGKTVNGSRRWINLIVFNLQASEVAKVCMVVYVSGYLVRRAERVRENLIGFALPLFLTSLFLIFLLMEPDFGASVVLIGTVIALLFIGGAPVYQFIAIVIMAVLVMAGLALSESYRVKRLMNFVDPWADPFNDGYQLSQALIAYGRGEWFGLGLGNSVQKLSYLPEAHTDFVFSIWVEEMGLLGGVVLLSLFALMLSRIFKIGHRALMGARPFAGYMCFGFAILILAQVIINVGVNTGFLPTKGLTLPLISYGGSSLIITLGSLFVVARVDIENKLASKGGESEERKRKSDESIDDGEALA.

The next 9 membrane-spanning stretches (helical) occupy residues 22–42 (LWFV…VASA), 56–76 (FFMG…FMML), 86–106 (WGIL…VPGI), 116–136 (WINL…CMVV), 153–173 (LIGF…LLME), 186–206 (VIAL…IVIM), 280–300 (IWVE…FALM), 318–338 (FAGY…IINV), and 352–372 (LPLI…LFVV). A compositionally biased stretch (basic and acidic residues) spans 383 to 397 (SKGGESEERKRKSDE). The interval 383 to 406 (SKGGESEERKRKSDESIDDGEALA) is disordered.

This sequence belongs to the SEDS family. FtsW subfamily.

The protein resides in the cell inner membrane. The catalysed reaction is [GlcNAc-(1-&gt;4)-Mur2Ac(oyl-L-Ala-gamma-D-Glu-L-Lys-D-Ala-D-Ala)](n)-di-trans,octa-cis-undecaprenyl diphosphate + beta-D-GlcNAc-(1-&gt;4)-Mur2Ac(oyl-L-Ala-gamma-D-Glu-L-Lys-D-Ala-D-Ala)-di-trans,octa-cis-undecaprenyl diphosphate = [GlcNAc-(1-&gt;4)-Mur2Ac(oyl-L-Ala-gamma-D-Glu-L-Lys-D-Ala-D-Ala)](n+1)-di-trans,octa-cis-undecaprenyl diphosphate + di-trans,octa-cis-undecaprenyl diphosphate + H(+). It participates in cell wall biogenesis; peptidoglycan biosynthesis. Peptidoglycan polymerase that is essential for cell division. This is Probable peptidoglycan glycosyltransferase FtsW from Marinomonas mediterranea (strain ATCC 700492 / JCM 21426 / NBRC 103028 / MMB-1).